A 382-amino-acid polypeptide reads, in one-letter code: Na(+)/H(+) antiporter NhaA 2 (382 aa).

11 helical membrane passes run 8-28, 49-69, 87-107, 115-135, 146-166, 169-189, 209-229, 252-272, 286-306, 325-345, and 353-373; these read FFSS…AAII, LSVE…MVGL, ALPG…YVWF, LAGW…VLAL, IFLS…IALF, SNIS…LFIM, FFML…ALFI, WVTF…ALSG, VALG…LLAV, VSVL…LAFA, and EVKV…MLIL.

The protein belongs to the NhaA Na(+)/H(+) (TC 2.A.33) antiporter family.

It localises to the cell inner membrane. It carries out the reaction Na(+)(in) + 2 H(+)(out) = Na(+)(out) + 2 H(+)(in). In terms of biological role, na(+)/H(+) antiporter that extrudes sodium in exchange for external protons. This chain is Na(+)/H(+) antiporter NhaA 2, found in Klebsiella pneumoniae subsp. pneumoniae (strain ATCC 700721 / MGH 78578).